Reading from the N-terminus, the 229-residue chain is Lantibiotic transport ATP-binding protein SrtF (229 aa).

One can recognise an ABC transporter domain in the interval 2–225; it reads LKIQNLKKSY…EELFNNQILF (224 aa). ATP is bound at residue 34–41; it reads GPNGAGKS.

This sequence belongs to the ABC transporter superfamily.

Its function is as follows. Implicated in the export process of the lantibiotic SrtA. The protein is Lantibiotic transport ATP-binding protein SrtF (srtF) of Streptococcus pyogenes serotype M1.